The primary structure comprises 194 residues: dTTP/UTP pyrophosphatase (194 aa).

Aspartate 66 functions as the Proton acceptor in the catalytic mechanism.

The protein belongs to the Maf family. YhdE subfamily. A divalent metal cation is required as a cofactor.

The protein resides in the cytoplasm. The catalysed reaction is dTTP + H2O = dTMP + diphosphate + H(+). It carries out the reaction UTP + H2O = UMP + diphosphate + H(+). Its function is as follows. Nucleoside triphosphate pyrophosphatase that hydrolyzes dTTP and UTP. May have a dual role in cell division arrest and in preventing the incorporation of modified nucleotides into cellular nucleic acids. The protein is dTTP/UTP pyrophosphatase of Anaeromyxobacter dehalogenans (strain 2CP-C).